The sequence spans 93 residues: DNA/RNA-binding protein Alba (93 aa).

The residue at position 11 (Lys11) is an N6-acetyllysine.

Belongs to the histone-like Alba family. Post-translationally, acetylated. Acetylation at Lys-11 decreases DNA-binding affinity.

It localises to the cytoplasm. It is found in the chromosome. Its function is as follows. Binds double-stranded DNA tightly but without sequence specificity. Involved in DNA compaction. This chain is DNA/RNA-binding protein Alba, found in Pyrococcus horikoshii (strain ATCC 700860 / DSM 12428 / JCM 9974 / NBRC 100139 / OT-3).